Consider the following 811-residue polypeptide: Phenylalanine--tRNA ligase beta subunit (811 aa).

A tRNA-binding domain is found at A40–D156. Residues K411–Y486 enclose the B5 domain. Mg(2+) is bound by residues D464, D470, E473, and E474. An FDX-ACB domain is found at P717 to R810.

It belongs to the phenylalanyl-tRNA synthetase beta subunit family. Type 1 subfamily. As to quaternary structure, tetramer of two alpha and two beta subunits. The cofactor is Mg(2+).

It is found in the cytoplasm. The enzyme catalyses tRNA(Phe) + L-phenylalanine + ATP = L-phenylalanyl-tRNA(Phe) + AMP + diphosphate + H(+). This chain is Phenylalanine--tRNA ligase beta subunit, found in Oceanobacillus iheyensis (strain DSM 14371 / CIP 107618 / JCM 11309 / KCTC 3954 / HTE831).